The primary structure comprises 378 residues: Ribosomal RNA large subunit methyltransferase G (378 aa).

It belongs to the methyltransferase superfamily. RlmG family.

It is found in the cytoplasm. The enzyme catalyses guanosine(1835) in 23S rRNA + S-adenosyl-L-methionine = N(2)-methylguanosine(1835) in 23S rRNA + S-adenosyl-L-homocysteine + H(+). Functionally, specifically methylates the guanine in position 1835 (m2G1835) of 23S rRNA. The polypeptide is Ribosomal RNA large subunit methyltransferase G (Shigella flexneri).